The chain runs to 729 residues: Fatty acid oxidation complex subunit alpha (729 aa).

An enoyl-CoA hydratase/isomerase region spans residues 1-189 (MLYKGDTLYL…KIGLVDGVVK (189 aa)). D296 contacts substrate. Positions 311-729 (ETPKQAAVLG…ARPVGDLKTA (419 aa)) are 3-hydroxyacyl-CoA dehydrogenase. NAD(+) contacts are provided by residues M324, D343, 400–402 (VVE), K407, and S429. H450 serves as the catalytic For 3-hydroxyacyl-CoA dehydrogenase activity. NAD(+) is bound at residue N453. Residues N500 and Y660 each contribute to the substrate site. Residues 708–729 (RHNEPYYPPVEPARPVGDLKTA) are disordered.

This sequence in the N-terminal section; belongs to the enoyl-CoA hydratase/isomerase family. It in the C-terminal section; belongs to the 3-hydroxyacyl-CoA dehydrogenase family. Heterotetramer of two alpha chains (FadB) and two beta chains (FadA).

It catalyses the reaction a (3S)-3-hydroxyacyl-CoA + NAD(+) = a 3-oxoacyl-CoA + NADH + H(+). The enzyme catalyses a (3S)-3-hydroxyacyl-CoA = a (2E)-enoyl-CoA + H2O. The catalysed reaction is a 4-saturated-(3S)-3-hydroxyacyl-CoA = a (3E)-enoyl-CoA + H2O. It carries out the reaction (3S)-3-hydroxybutanoyl-CoA = (3R)-3-hydroxybutanoyl-CoA. It catalyses the reaction a (3Z)-enoyl-CoA = a 4-saturated (2E)-enoyl-CoA. The enzyme catalyses a (3E)-enoyl-CoA = a 4-saturated (2E)-enoyl-CoA. Its pathway is lipid metabolism; fatty acid beta-oxidation. In terms of biological role, involved in the aerobic and anaerobic degradation of long-chain fatty acids via beta-oxidation cycle. Catalyzes the formation of 3-oxoacyl-CoA from enoyl-CoA via L-3-hydroxyacyl-CoA. It can also use D-3-hydroxyacyl-CoA and cis-3-enoyl-CoA as substrate. The polypeptide is Fatty acid oxidation complex subunit alpha (Escherichia coli O8 (strain IAI1)).